The following is a 530-amino-acid chain: Membrane-associated transporter protein (530 aa).

Residues 1–46 are Cytoplasmic-facing; that stretch reads MGSNSGQAGRHIYKSLADDGPFDSVEPPKRPTSRLIMHSMAMFGRE. A helical membrane pass occupies residues 47 to 67; sequence FCYAVEAAYVTPVLLSVGLPS. Residue S68 is a topological domain, extracellular. Residues 69–89 form a helical membrane-spanning segment; it reads LYSIVWFLSPILGFLLQPVVG. Topologically, residues 90–110 are cytoplasmic; sequence SASDHCRSRWGRRRPYILTLG. Residues 111–131 form a helical membrane-spanning segment; that stretch reads VMMLVGMALYLNGATVVAALI. Residues 132–138 are Extracellular-facing; the sequence is ANPRRKL. Residues 139–159 traverse the membrane as a helical segment; that stretch reads VWAISVTMIGVVLFDFAADFI. Over 160 to 184 the chain is Cytoplasmic; sequence DGPIKAYLFDVCSHQDKEKGLHYHA. Residues 185–205 traverse the membrane as a helical segment; the sequence is LFTGFGGALGYLLGAIDWAHL. Topologically, residues 206-216 are extracellular; sequence ELGRLLGTEFQ. The chain crosses the membrane as a helical span at residues 217-237; sequence VMFFFSALVLTLCFTVHLCSI. The Cytoplasmic segment spans residues 238-318; the sequence is SEAPLTEVAK…ALVNMPPHYR (81 aa). The helical transmembrane segment at 319–339 threads the bilayer; the sequence is YLCISHLIGWTAFLSNMLFFT. The Extracellular segment spans residues 340–366; the sequence is DFMGQIVYRGDPYSAHNSTEFLIYERG. N356 carries N-linked (GlcNAc...) asparagine glycosylation. The helical transmembrane segment at 367–387 threads the bilayer; the sequence is VEVGCWGLCINSVFSSLYSYF. Residues 388–398 lie on the Cytoplasmic side of the membrane; it reads QKVLVSYIGLK. The chain crosses the membrane as a helical span at residues 399 to 419; sequence GLYFTGYLLFGLGTGFIGLFP. The Extracellular segment spans residues 420–425; sequence NVYSTL. A helical transmembrane segment spans residues 426-446; that stretch reads VLCSLFGVMSSTLYTVPFNLI. Residues 447–477 are Cytoplasmic-facing; it reads TEYHREEEKERQQAPGGDPDNSVRGKGMDCA. Residues 478–498 traverse the membrane as a helical segment; it reads TLTCMVQLAQILVGGGLGFLV. The Extracellular portion of the chain corresponds to 499 to 504; it reads NTAGTV. A helical membrane pass occupies residues 505–525; sequence VVVVITASAVALIGCCFVALF. Residues 526 to 530 lie on the Cytoplasmic side of the membrane; sequence VRYVD.

It belongs to the glycoside-pentoside-hexuronide (GPH) cation symporter transporter (TC 2.A.2) family. In terms of assembly, interacts with TYRP1. As to expression, expressed in mature melanocytes.

It localises to the melanosome membrane. The enzyme catalyses sucrose(out) + H(+)(out) = sucrose(in) + H(+)(in). It catalyses the reaction D-glucose(out) + H(+)(out) = D-glucose(in) + H(+)(in). Functionally, proton-associated glucose and sucrose transporter. May be able to transport also fructose. Expressed at a late melanosome maturation stage where functions as proton/glucose exporter which increase lumenal pH by decreasing glycolysis. Regulates melanogenesis by maintaining melanosome neutralization that is initially initiated by transient OCA2 and required for a proper function of the tyrosinase TYR. This chain is Membrane-associated transporter protein, found in Homo sapiens (Human).